The primary structure comprises 111 residues: MNAHKERLESNLLELLQEALAGLNDSELNSLSVTKVECSKGKHHALVFVLSSDHKILSKLKKAEGLIRQFVLQASGWFKCPKLSFVSDNSLEKQLRLDAIFNEIAKGRDND.

It belongs to the RbfA family. In terms of assembly, monomer. Binds 30S ribosomal subunits, but not 50S ribosomal subunits or 70S ribosomes.

It is found in the cytoplasm. Functionally, one of several proteins that assist in the late maturation steps of the functional core of the 30S ribosomal subunit. Associates with free 30S ribosomal subunits (but not with 30S subunits that are part of 70S ribosomes or polysomes). Required for efficient processing of 16S rRNA. May interact with the 5'-terminal helix region of 16S rRNA. This Helicobacter pylori (strain HPAG1) protein is Ribosome-binding factor A.